A 359-amino-acid polypeptide reads, in one-letter code: Heme A synthase (359 aa).

5 helical membrane passes run 8–28, 94–114, 124–144, 159–179, and 215–235; these read IMSI…VVGG, LLGR…YYLK, LLLI…MVKS, GHLL…LIII, and IIIF…GLDA. A heme-binding site is contributed by His-274. Transmembrane regions (helical) follow at residues 276-296, 303-323, and 328-348; these read WFGI…IILN, MGMV…ITLV, and ILAA…FLFI. His-334 is a heme binding site.

This sequence belongs to the COX15/CtaA family. Type 2 subfamily. In terms of assembly, interacts with CtaB. It depends on heme b as a cofactor.

The protein localises to the cell membrane. The catalysed reaction is Fe(II)-heme o + 2 A + H2O = Fe(II)-heme a + 2 AH2. Its pathway is porphyrin-containing compound metabolism; heme A biosynthesis; heme A from heme O: step 1/1. In terms of biological role, catalyzes the conversion of heme O to heme A by two successive hydroxylations of the methyl group at C8. The first hydroxylation forms heme I, the second hydroxylation results in an unstable dihydroxymethyl group, which spontaneously dehydrates, resulting in the formyl group of heme A. The polypeptide is Heme A synthase (Orientia tsutsugamushi (strain Ikeda) (Rickettsia tsutsugamushi)).